Here is a 407-residue protein sequence, read N- to C-terminus: D-mannose isomerase (407 aa).

Catalysis depends on proton donor/acceptor residues His-251 and His-383.

The protein belongs to the N-acylglucosamine 2-epimerase family. Homodimer.

The enzyme catalyses D-mannose = D-fructose. It carries out the reaction D-lyxose = D-xylulose. With respect to regulation, significantly inhibited by divalent metal ions such as Cu(2+), Cd(2+) or Ca(2+). In terms of biological role, catalyzes the reversible isomerization of D-mannose to D-fructose. Shows weaker activity on D-lyxose, but cannot use N-acetyl D-glucosamine. In Thermobifida fusca (Thermomonospora fusca), this protein is D-mannose isomerase.